Here is a 739-residue protein sequence, read N- to C-terminus: Nucleoprotein (739 aa).

The stretch at 334-363 (VNVGEQYQQLREAATEAEKQLQQYAESREL) forms a coiled coil. A disordered region spans residues 415–646 (PKTSGHYDDD…QDSDNTQPEH (232 aa)). Composition is skewed to low complexity over residues 449-458 (SQDTTIPDVV) and 504-514 (KGGQQKNSQKG). Polar residues predominate over residues 520–530 (RQTQSRPTQNI). Over residues 567–579 (EEADPLDDADDET) the composition is skewed to acidic residues. A compositionally biased stretch (basic and acidic residues) spans 611-638 (YRDHSEKKELPQDERQDQDHTQEARNQD).

This sequence belongs to the filoviruses nucleoprotein family. In terms of assembly, homooligomer. Homomultimerizes to form the nucleocapsid. Binds to viral genomic RNA. Interacts with VP35 and VP30 to form the nucleocapsid. Interacts with host PPP2R5C; this interaction leads to VP30 dephosphorylation and viral transcription. Interacts with VP24; this interaction facilitates nucleocapsid assembly and genome packaging. Interacts with matrix protein VP40; this interaction allows recruitment of the nucleocapsid into progeny virions. Interacts with host STAU1. Interacts with host NXF1 (via RNA-binding domain); this interaction recruits NXF1 to the inclusion bodies were viral replication takes place, probably to export viral mRNA-NXF1 complexes from these sites. Interacts with host CCDC92; this interaction sequesters NP in the host cytoplasm. Interacts with host TRIM14. Phosphorylated and O-glycosylated by host. Acetylated by host EP300 in vitro.

It is found in the virion. The protein resides in the host cytoplasm. In terms of biological role, oligomerizes into helical capsid to encapsidate the viral genome, protecting it from nucleases and the cellular innate immune response. VP35 binds to and stabilizes monomeric NP, keeping it soluble. Upon virus replication, NP is recruited to bind cooperatively viral genomic RNA and VP35 is released. The encapsidated genomic RNA is termed the nucleocapsid and serves as template for transcription and replication. The nucleocapsid is helical with a pitch of 10.81 NP per turn and a diameter of about 22nm. Each NP binds to six nucleotides of viral genomic RNA, three being exposed to the solvant and three hidden into the nucleocapsid. Also recruits host PPP2R5C phosphatase to dephosphorylate VP30 and thereby promote viral transcription. Upon virion assembly and budding, NP binds to VP24 and possibly host STAU1. The chain is Nucleoprotein (NP) from Zaire ebolavirus (strain Gabon-94) (ZEBOV).